The chain runs to 426 residues: Serine--tRNA ligase (426 aa).

231–233 provides a ligand contact to L-serine; the sequence is TAE. Position 262-264 (262-264) interacts with ATP; it reads RSE. E285 provides a ligand contact to L-serine. 349 to 352 is a binding site for ATP; it reads EISS. Residue S385 coordinates L-serine.

It belongs to the class-II aminoacyl-tRNA synthetase family. Type-1 seryl-tRNA synthetase subfamily. Homodimer. The tRNA molecule binds across the dimer.

It localises to the cytoplasm. The catalysed reaction is tRNA(Ser) + L-serine + ATP = L-seryl-tRNA(Ser) + AMP + diphosphate + H(+). The enzyme catalyses tRNA(Sec) + L-serine + ATP = L-seryl-tRNA(Sec) + AMP + diphosphate + H(+). Its pathway is aminoacyl-tRNA biosynthesis; selenocysteinyl-tRNA(Sec) biosynthesis; L-seryl-tRNA(Sec) from L-serine and tRNA(Sec): step 1/1. Functionally, catalyzes the attachment of serine to tRNA(Ser). Is also able to aminoacylate tRNA(Sec) with serine, to form the misacylated tRNA L-seryl-tRNA(Sec), which will be further converted into selenocysteinyl-tRNA(Sec). The protein is Serine--tRNA ligase of Teredinibacter turnerae (strain ATCC 39867 / T7901).